The chain runs to 22 residues: Heliocin (22 aa).

Residue Gln-1 is modified to Pyrrolidone carboxylic acid. The disordered stretch occupies residues 1 to 22 (QRFIHPTYRPPPQPRRPVIMRA). A glycan (O-linked (GalNAc...) threonine) is linked at Thr-7.

As to quaternary structure, monomer. In terms of tissue distribution, hemolymph.

The protein resides in the secreted. Has antibacterial activity, preferentially against Gram-negative bacteria. This is Heliocin from Heliothis virescens (Tobacco budworm moth).